The primary structure comprises 410 residues: Histidine--tRNA ligase (410 aa).

It belongs to the class-II aminoacyl-tRNA synthetase family.

It localises to the cytoplasm. It catalyses the reaction tRNA(His) + L-histidine + ATP = L-histidyl-tRNA(His) + AMP + diphosphate + H(+). This chain is Histidine--tRNA ligase, found in Methanoregula boonei (strain DSM 21154 / JCM 14090 / 6A8).